The primary structure comprises 567 residues: Proline--tRNA ligase (567 aa).

It belongs to the class-II aminoacyl-tRNA synthetase family. ProS type 1 subfamily. In terms of assembly, homodimer.

It is found in the cytoplasm. The enzyme catalyses tRNA(Pro) + L-proline + ATP = L-prolyl-tRNA(Pro) + AMP + diphosphate. Catalyzes the attachment of proline to tRNA(Pro) in a two-step reaction: proline is first activated by ATP to form Pro-AMP and then transferred to the acceptor end of tRNA(Pro). As ProRS can inadvertently accommodate and process non-cognate amino acids such as alanine and cysteine, to avoid such errors it has two additional distinct editing activities against alanine. One activity is designated as 'pretransfer' editing and involves the tRNA(Pro)-independent hydrolysis of activated Ala-AMP. The other activity is designated 'posttransfer' editing and involves deacylation of mischarged Ala-tRNA(Pro). The misacylated Cys-tRNA(Pro) is not edited by ProRS. The protein is Proline--tRNA ligase of Campylobacter curvus (strain 525.92).